A 253-amino-acid chain; its full sequence is Testis-expressed protein 47 (253 aa).

The protein is Testis-expressed protein 47 (Tex47) of Mus musculus (Mouse).